Consider the following 466-residue polypeptide: 3-isopropylmalate dehydratase large subunit (466 aa).

[4Fe-4S] cluster contacts are provided by cysteine 347, cysteine 407, and cysteine 410.

The protein belongs to the aconitase/IPM isomerase family. LeuC type 1 subfamily. In terms of assembly, heterodimer of LeuC and LeuD. The cofactor is [4Fe-4S] cluster.

It carries out the reaction (2R,3S)-3-isopropylmalate = (2S)-2-isopropylmalate. It participates in amino-acid biosynthesis; L-leucine biosynthesis; L-leucine from 3-methyl-2-oxobutanoate: step 2/4. Functionally, catalyzes the isomerization between 2-isopropylmalate and 3-isopropylmalate, via the formation of 2-isopropylmaleate. The chain is 3-isopropylmalate dehydratase large subunit from Klebsiella pneumoniae (strain 342).